The sequence spans 1262 residues: Isoleucine--tRNA ligase, cytoplasmic (1262 aa).

Met1 is modified (N-acetylmethionine). A 'HIGH' region motif is present at residues Pro48–His58. The 'KMSKS' region motif lies at Lys600–Arg604. An ATP-binding site is contributed by Lys603. 2 positions are modified to phosphoserine: Ser1047 and Ser1049. Thr1058 is subject to Phosphothreonine.

This sequence belongs to the class-I aminoacyl-tRNA synthetase family. In terms of assembly, part of a multisubunit complex that groups tRNA ligases for Arg (RARS1), Asp (DARS1), Gln (QARS1), Ile (IARS1), Leu (LARS1), Lys (KARS1), Met (MARS1) the bifunctional ligase for Glu and Pro (EPRS1) and the auxiliary subunits AIMP1/p43, AIMP2/p38 and EEF1E1/p18. Expressed in liver and muscle (at protein level).

Its subcellular location is the cytoplasm. It is found in the cytosol. It carries out the reaction tRNA(Ile) + L-isoleucine + ATP = L-isoleucyl-tRNA(Ile) + AMP + diphosphate. Its function is as follows. Catalyzes the specific attachment of an amino acid to its cognate tRNA in a 2 step reaction: the amino acid (AA) is first activated by ATP to form AA-AMP and then transferred to the acceptor end of the tRNA. This is Isoleucine--tRNA ligase, cytoplasmic from Homo sapiens (Human).